The chain runs to 311 residues: HPr kinase/phosphorylase (311 aa).

Active-site residues include H139 and K160. 154–161 (GASGVGKS) is an ATP binding site. S161 lines the Mg(2+) pocket. D178 functions as the Proton acceptor; for phosphorylation activity. Proton donor; for dephosphorylation activity in the catalytic mechanism. Positions 202 to 211 (LEIRGIGIID) are important for the catalytic mechanism of both phosphorylation and dephosphorylation. Residue E203 coordinates Mg(2+). R244 is an active-site residue. Residues 265-270 (PVRPGR) form an important for the catalytic mechanism of dephosphorylation region.

Belongs to the HPrK/P family. As to quaternary structure, homohexamer. It depends on Mg(2+) as a cofactor.

The catalysed reaction is [HPr protein]-L-serine + ATP = [HPr protein]-O-phospho-L-serine + ADP + H(+). The enzyme catalyses [HPr protein]-O-phospho-L-serine + phosphate + H(+) = [HPr protein]-L-serine + diphosphate. Its function is as follows. Catalyzes the ATP- as well as the pyrophosphate-dependent phosphorylation of a specific serine residue in HPr, a phosphocarrier protein of the phosphoenolpyruvate-dependent sugar phosphotransferase system (PTS). HprK/P also catalyzes the pyrophosphate-producing, inorganic phosphate-dependent dephosphorylation (phosphorolysis) of seryl-phosphorylated HPr (P-Ser-HPr). The two antagonistic activities of HprK/P are regulated by several intracellular metabolites, which change their concentration in response to the absence or presence of rapidly metabolisable carbon sources (glucose, fructose, etc.) in the growth medium. Therefore, by controlling the phosphorylation state of HPr, HPrK/P is a sensor enzyme that plays a major role in the regulation of carbon metabolism and sugar transport: it mediates carbon catabolite repression (CCR), and regulates PTS-catalyzed carbohydrate uptake and inducer exclusion. The protein is HPr kinase/phosphorylase of Exiguobacterium sibiricum (strain DSM 17290 / CCUG 55495 / CIP 109462 / JCM 13490 / 255-15).